We begin with the raw amino-acid sequence, 138 residues long: Gene 64 protein (138 aa).

This chain is Gene 64 protein (64), found in Mycobacterium (Mycobacteriophage D29).